Reading from the N-terminus, the 319-residue chain is Ribosomal large subunit pseudouridine synthase C (319 aa).

One can recognise an S4 RNA-binding domain in the interval 20–83 (QRIDNFLRTQ…AEREEEAVSP (64 aa)). Asp-144 is an active-site residue.

The protein belongs to the pseudouridine synthase RluA family.

The enzyme catalyses uridine(955/2504/2580) in 23S rRNA = pseudouridine(955/2504/2580) in 23S rRNA. In terms of biological role, responsible for synthesis of pseudouridine from uracil at positions 955, 2504 and 2580 in 23S ribosomal RNA. The polypeptide is Ribosomal large subunit pseudouridine synthase C (rluC) (Escherichia coli O157:H7).